Consider the following 677-residue polypeptide: Serine/threonine-protein kinase YPK2/YKR2 (677 aa).

The span at 1 to 12 (MHSWRISKFKLG) shows a compositional bias: basic residues. The segment at 1–115 (MHSWRISKFK…ETQGPSSESG (115 aa)) is disordered. Residues 41 to 56 (KHHDGSPKNHNHEHEH) are compositionally biased toward basic and acidic residues. 2 stretches are compositionally biased toward polar residues: residues 61–93 (INTN…NDNS) and 101–115 (SQSS…SESG). Thr-63 and Thr-66 each carry phosphothreonine. The residue at position 72 (Ser-72) is a Phosphoserine. A Protein kinase domain is found at 344-599 (FDLLKVIGKG…TDEIRNHPFF (256 aa)). Residues 350–358 (IGKGSFGKV) and Lys-373 each bind ATP. Asp-467 acts as the Proton acceptor in catalysis. Thr-499 carries the phosphothreonine modification. At Thr-501 the chain carries Phosphothreonine; by PKH2. One can recognise an AGC-kinase C-terminal domain in the interval 600–670 (KDISWKKLLL…IGDEQLGDSP (71 aa)). Phosphoserine; by TOR2 is present on Ser-641. Position 650 is a phosphoserine (Ser-650). Thr-659 bears the Phosphothreonine; by TOR2 mark. At Ser-669 the chain carries Phosphoserine.

It belongs to the protein kinase superfamily. AGC Ser/Thr protein kinase family. RAC subfamily. In terms of processing, autophosphorylated. Phosphorylated by PKH2 and TOR2.

It is found in the cytoplasm. It catalyses the reaction L-seryl-[protein] + ATP = O-phospho-L-seryl-[protein] + ADP + H(+). The catalysed reaction is L-threonyl-[protein] + ATP = O-phospho-L-threonyl-[protein] + ADP + H(+). With respect to regulation, activated by phytosphingosine (PHS), a sphingoid long chain base. Activated by PKH2 phosphorylation. Kinase activity is regulated by TOR2 via direct phosphorylation of Ser-641 and Thr-659. Plays an essential role in the proliferation of yeast cells. Involved in a signaling pathway, required for optimal cell wall integrity, that acts in parallel with the PKC1-SLT2-dependent pathway. A substrate of TOR complex 2 (TORC2) and required for TORC2 to regulate spatial aspects of cell growth. Phosphorylation of residue Thr-501 is indispensable for function. May act as a downstream kinase in the sphingolipid-mediated signaling pathway. The protein is Serine/threonine-protein kinase YPK2/YKR2 (YPK2) of Saccharomyces cerevisiae (strain ATCC 204508 / S288c) (Baker's yeast).